A 431-amino-acid chain; its full sequence is 3-phosphoshikimate 1-carboxyvinyltransferase (431 aa).

Residues lysine 22, serine 23, and arginine 27 each contribute to the 3-phosphoshikimate site. Lysine 22 contributes to the phosphoenolpyruvate binding site. 2 residues coordinate phosphoenolpyruvate: glycine 94 and arginine 122. 4 residues coordinate 3-phosphoshikimate: serine 167, glutamine 169, aspartate 314, and lysine 341. Phosphoenolpyruvate is bound at residue glutamine 169. Aspartate 314 functions as the Proton acceptor in the catalytic mechanism. Positions 345 and 391 each coordinate phosphoenolpyruvate.

Belongs to the EPSP synthase family. As to quaternary structure, monomer.

It is found in the cytoplasm. It carries out the reaction 3-phosphoshikimate + phosphoenolpyruvate = 5-O-(1-carboxyvinyl)-3-phosphoshikimate + phosphate. Its pathway is metabolic intermediate biosynthesis; chorismate biosynthesis; chorismate from D-erythrose 4-phosphate and phosphoenolpyruvate: step 6/7. Catalyzes the transfer of the enolpyruvyl moiety of phosphoenolpyruvate (PEP) to the 5-hydroxyl of shikimate-3-phosphate (S3P) to produce enolpyruvyl shikimate-3-phosphate and inorganic phosphate. In Leuconostoc citreum (strain KM20), this protein is 3-phosphoshikimate 1-carboxyvinyltransferase.